A 393-amino-acid polypeptide reads, in one-letter code: NAD(P)H-quinone oxidoreductase subunit H, chloroplastic (393 aa).

Belongs to the complex I 49 kDa subunit family. NDH is composed of at least 16 different subunits, 5 of which are encoded in the nucleus.

The protein resides in the plastid. The protein localises to the chloroplast thylakoid membrane. It carries out the reaction a plastoquinone + NADH + (n+1) H(+)(in) = a plastoquinol + NAD(+) + n H(+)(out). The catalysed reaction is a plastoquinone + NADPH + (n+1) H(+)(in) = a plastoquinol + NADP(+) + n H(+)(out). NDH shuttles electrons from NAD(P)H:plastoquinone, via FMN and iron-sulfur (Fe-S) centers, to quinones in the photosynthetic chain and possibly in a chloroplast respiratory chain. The immediate electron acceptor for the enzyme in this species is believed to be plastoquinone. Couples the redox reaction to proton translocation, and thus conserves the redox energy in a proton gradient. The polypeptide is NAD(P)H-quinone oxidoreductase subunit H, chloroplastic (Lotus japonicus (Lotus corniculatus var. japonicus)).